The sequence spans 155 residues: Protein Smg homolog (155 aa).

It belongs to the Smg family.

The polypeptide is Protein Smg homolog (Azoarcus sp. (strain BH72)).